We begin with the raw amino-acid sequence, 346 residues long: Histidinol-phosphate aminotransferase (346 aa).

The residue at position 209 (Lys-209) is an N6-(pyridoxal phosphate)lysine.

It belongs to the class-II pyridoxal-phosphate-dependent aminotransferase family. Histidinol-phosphate aminotransferase subfamily. In terms of assembly, homodimer. Pyridoxal 5'-phosphate is required as a cofactor.

It catalyses the reaction L-histidinol phosphate + 2-oxoglutarate = 3-(imidazol-4-yl)-2-oxopropyl phosphate + L-glutamate. It functions in the pathway amino-acid biosynthesis; L-histidine biosynthesis; L-histidine from 5-phospho-alpha-D-ribose 1-diphosphate: step 7/9. The protein is Histidinol-phosphate aminotransferase of Vibrio cholerae serotype O1 (strain ATCC 39315 / El Tor Inaba N16961).